A 1028-amino-acid chain; its full sequence is Ubiquitin conjugation factor E4 A (1028 aa).

The interval 33–57 (KEQLKQQSDELPASPDDSDNSVSES) is disordered. An N6-acetyllysine modification is found at Lys386. Residues 949 to 1023 (DACDEFLDPI…QRWLAERKQQ (75 aa)) enclose the U-box domain.

Belongs to the ubiquitin conjugation factor E4 family. In terms of tissue distribution, expressed in liver, heart, brain, kidney and testis.

It is found in the cytoplasm. The enzyme catalyses S-ubiquitinyl-[E2 ubiquitin-conjugating enzyme]-L-cysteine + [acceptor protein]-L-lysine = [E2 ubiquitin-conjugating enzyme]-L-cysteine + N(6)-ubiquitinyl-[acceptor protein]-L-lysine.. The protein operates within protein modification; protein ubiquitination. Functionally, ubiquitin-protein ligase that probably functions as an E3 ligase in conjunction with specific E1 and E2 ligases. May also function as an E4 ligase mediating the assembly of polyubiquitin chains on substrates ubiquitinated by another E3 ubiquitin ligase. Mediates 'Lys-48'-linked polyubiquitination of substrates. The polypeptide is Ubiquitin conjugation factor E4 A (Mus musculus (Mouse)).